A 287-amino-acid polypeptide reads, in one-letter code: 4-hydroxybenzoate octaprenyltransferase (287 aa).

9 helical membrane passes run 7–27 (FISYGYLIRLDKPIGTLLLLW), 30–50 (LWALWLASSGVLDLSILLIFV), 94–114 (VAVASFLALCAFLLIQPLNAF), 118–138 (LSVLALLVAFIYPFTKRFFAM), 142–162 (VLGIAFGFGIPMAYAAILDFI), 167–187 (WFLFTGNIFWAIAYDTAYAMV), 209–229 (VVVIAISYGMLFLSHLWVAQL), 235–255 (YFLVGWFAALACAIYHLKLVS), and 266–286 (FRHNNWLGGFLFLGIVLGLGV).

This sequence belongs to the UbiA prenyltransferase family. Mg(2+) serves as cofactor.

It is found in the cell inner membrane. The enzyme catalyses all-trans-octaprenyl diphosphate + 4-hydroxybenzoate = 4-hydroxy-3-(all-trans-octaprenyl)benzoate + diphosphate. It participates in cofactor biosynthesis; ubiquinone biosynthesis. Its function is as follows. Catalyzes the prenylation of para-hydroxybenzoate (PHB) with an all-trans polyprenyl group. Mediates the second step in the final reaction sequence of ubiquinone-8 (UQ-8) biosynthesis, which is the condensation of the polyisoprenoid side chain with PHB, generating the first membrane-bound Q intermediate 3-octaprenyl-4-hydroxybenzoate. This is 4-hydroxybenzoate octaprenyltransferase from Polynucleobacter necessarius subsp. necessarius (strain STIR1).